Reading from the N-terminus, the 963-residue chain is Probable sucrose-phosphate synthase 2 (963 aa).

Residues 111–150 (KLRTDTNADMSEDLFEGEKGEDAGDPSVAYGDSTTGSSPK) are disordered.

It belongs to the glycosyltransferase 1 family. Homodimer or homotetramer. As to expression, expressed in germinating seeds.

The enzyme catalyses beta-D-fructose 6-phosphate + UDP-alpha-D-glucose = sucrose 6(F)-phosphate + UDP + H(+). The protein operates within glycan biosynthesis; sucrose biosynthesis; sucrose from D-fructose 6-phosphate and UDP-alpha-D-glucose: step 1/2. With respect to regulation, activity is regulated by phosphorylation and moderated by concentration of metabolites and light. In terms of biological role, plays a role in photosynthetic sucrose synthesis by catalyzing the rate-limiting step of sucrose biosynthesis from UDP-glucose and fructose- 6-phosphate. Involved in the regulation of carbon partitioning in the leaves of plants. May regulate the synthesis of sucrose and therefore play a major role as a limiting factor in the export of photoassimilates out of the leaf. Plays a role for sucrose availability that is essential for plant growth and fiber elongation. In Oryza sativa subsp. japonica (Rice), this protein is Probable sucrose-phosphate synthase 2 (SPS2).